Here is a 333-residue protein sequence, read N- to C-terminus: MERVIQETDNDAFSCKISAITKRYLPSSEQKKIGNYEHYEDIHLEFCKEIKSRSRRKYANITKACRHSLPVMNYGTYLRTVSIDLKLTQWLKNNLENPADKVQVINLGCGSDLRMMTFLASFPGVQWLDLDYKDVVTFKSTILRSNAKFRASLQIEGDLPEEPSSIENVITDRYQLLPCNVTDDEQLIPILKKYTDFSVPAVILTECVLCYLHESKASQLISTVTGLYKQGYWISYDPIGGSQTNDRFGSIMQDNLMESRQLSMPTLMVFNSEDKYKERFPGKSEIQTMWDYYQNHLEDSERQRLKTLQFLDEIEELQVIFSHYVICTTNWRI.

S-adenosyl-L-methionine-binding positions include R79, G108, D131, N180–V181, and E206.

The protein belongs to the methyltransferase superfamily. LCMT family.

The enzyme catalyses [phosphatase 2A protein]-C-terminal L-leucine + S-adenosyl-L-methionine = [phosphatase 2A protein]-C-terminal L-leucine methyl ester + S-adenosyl-L-homocysteine. Its function is as follows. Methylates the carboxyl group of the C-terminal leucine residue of protein phosphatase 2A catalytic subunits to form alpha-leucine ester residues. This chain is Leucine carboxyl methyltransferase 1 (PPM1), found in Kluyveromyces lactis (strain ATCC 8585 / CBS 2359 / DSM 70799 / NBRC 1267 / NRRL Y-1140 / WM37) (Yeast).